Here is a 216-residue protein sequence, read N- to C-terminus: Phosphatidylserine decarboxylase proenzyme (216 aa).

The active-site Schiff-base intermediate with substrate; via pyruvic acid is the serine 183. Serine 183 is subject to Pyruvic acid (Ser); by autocatalysis.

The protein belongs to the phosphatidylserine decarboxylase family. PSD-A subfamily. As to quaternary structure, heterodimer of a large membrane-associated beta subunit and a small pyruvoyl-containing alpha subunit. Pyruvate is required as a cofactor. In terms of processing, is synthesized initially as an inactive proenzyme. Formation of the active enzyme involves a self-maturation process in which the active site pyruvoyl group is generated from an internal serine residue via an autocatalytic post-translational modification. Two non-identical subunits are generated from the proenzyme in this reaction, and the pyruvate is formed at the N-terminus of the alpha chain, which is derived from the carboxyl end of the proenzyme. The post-translation cleavage follows an unusual pathway, termed non-hydrolytic serinolysis, in which the side chain hydroxyl group of the serine supplies its oxygen atom to form the C-terminus of the beta chain, while the remainder of the serine residue undergoes an oxidative deamination to produce ammonia and the pyruvoyl prosthetic group on the alpha chain.

The protein localises to the cell membrane. It catalyses the reaction a 1,2-diacyl-sn-glycero-3-phospho-L-serine + H(+) = a 1,2-diacyl-sn-glycero-3-phosphoethanolamine + CO2. Its pathway is phospholipid metabolism; phosphatidylethanolamine biosynthesis; phosphatidylethanolamine from CDP-diacylglycerol: step 2/2. Its function is as follows. Catalyzes the formation of phosphatidylethanolamine (PtdEtn) from phosphatidylserine (PtdSer). The protein is Phosphatidylserine decarboxylase proenzyme of Cupriavidus taiwanensis (strain DSM 17343 / BCRC 17206 / CCUG 44338 / CIP 107171 / LMG 19424 / R1) (Ralstonia taiwanensis (strain LMG 19424)).